We begin with the raw amino-acid sequence, 181 residues long: Large ribosomal subunit protein uL6 (181 aa).

The protein belongs to the universal ribosomal protein uL6 family. In terms of assembly, part of the 50S ribosomal subunit.

This protein binds to the 23S rRNA, and is important in its secondary structure. It is located near the subunit interface in the base of the L7/L12 stalk, and near the tRNA binding site of the peptidyltransferase center. In Coprothermobacter proteolyticus (strain ATCC 35245 / DSM 5265 / OCM 4 / BT), this protein is Large ribosomal subunit protein uL6.